The following is a 117-amino-acid chain: MKKVSWEKREKKKVAIERIDTLFTLAEKVVKYSPDLARRYVELALEIQKKSKVKLPRKWKRRYCKRCHAFLVPGFNARVRLRTDRMPHVVITCLECGHIMRYPYLREVKEKRKRKKD.

Positions 64, 67, 93, and 96 each coordinate Zn(2+).

This sequence belongs to the eukaryotic/archaeal RNase P protein component 4 family. In terms of assembly, consists of a catalytic RNA component and at least 4-5 protein subunits. The cofactor is Zn(2+).

It localises to the cytoplasm. It carries out the reaction Endonucleolytic cleavage of RNA, removing 5'-extranucleotides from tRNA precursor.. Functionally, part of ribonuclease P, a protein complex that generates mature tRNA molecules by cleaving their 5'-ends. This is Ribonuclease P protein component 4 from Pyrococcus abyssi (strain GE5 / Orsay).